Reading from the N-terminus, the 326-residue chain is Vascular endothelial growth factor D (326 aa).

Residues 1 to 21 form the signal peptide; sequence MYGEWAAVNILMMSYVYLVQG. Positions 22–93 are excised as a propeptide; it reads FSIEHRAVKD…SRSTSHRSTR (72 aa). Intrachain disulfides connect C116-C158, C147-C194, and C151-C196. N-linked (GlcNAc...) asparagine glycans are attached at residues N160 and N190. Residues 211–326 constitute a propeptide that is removed on maturation; it reads SIQIPEEDQC…CRSMVFSLSP (116 aa). Residues 227-242 form a 1; approximate repeat; the sequence is CPVDMLWDNTKCKCVL. A 4 X 16 AA repeats of C-X(10)-C-X-C-X(1,3)-C region spans residues 227 to 317; the sequence is CPVDMLWDNT…KHKMFHPDTC (91 aa). 2 repeat units span residues 263 to 278 and 282 to 298. N292 is a glycosylation site (N-linked (GlcNAc...) asparagine). One copy of the 4; truncated repeat lies at 306-317; the sequence is CQKHKMFHPDTC.

Belongs to the PDGF/VEGF growth factor family. Homodimer; non-covalent and antiparallel. Undergoes a complex proteolytic maturation which generates a variety of processed secreted forms with increased activity toward VEGFR-3 and VEGFR-2. VEGF-D first form an antiparallel homodimer linked by disulfide bonds before secretion. The fully processed VEGF-D is composed mostly of two VEGF homology domains (VHDs) bound by non-covalent interactions. Highly expressed in the spleen, kidney, lung, tongue, ovary and mammary gland.

The protein resides in the secreted. Functionally, growth factor active in angiogenesis, lymphangiogenesis and endothelial cell growth, stimulating their proliferation and migration and also has effects on the permeability of blood vessels. May function in the formation of the venous and lymphatic vascular systems during embryogenesis, and also in the maintenance of differentiated lymphatic endothelium in adults. Binds and activates VEGFR-3 (Flt4) receptor. In Rattus norvegicus (Rat), this protein is Vascular endothelial growth factor D.